An 83-amino-acid chain; its full sequence is Small ribosomal subunit protein bS16 (83 aa).

It belongs to the bacterial ribosomal protein bS16 family.

In Chromobacterium violaceum (strain ATCC 12472 / DSM 30191 / JCM 1249 / CCUG 213 / NBRC 12614 / NCIMB 9131 / NCTC 9757 / MK), this protein is Small ribosomal subunit protein bS16.